We begin with the raw amino-acid sequence, 333 residues long: 2-haloacrylate reductase (333 aa).

153–159 (AAAGGMG) is a binding site for NADP(+).

This sequence belongs to the zinc-containing alcohol dehydrogenase family.

It carries out the reaction (S)-2-chloropropanoate + NADP(+) = 2-chloroacrylate + NADPH + H(+). In terms of biological role, involved in the degradation of unsaturated organohalogen compounds. Catalyzes the NADPH-dependent reduction of the carbon-carbon double bond of 2-chloroacrylate to produce (S)-2-chloropropionate, which is probably further metabolized to (R)-lactate by (S)-2-haloacid dehalogenase. Can also use 2-bromoacrylate as substrate. Does not act on acrylate, methacrylate, 1,4-benzoquinone and 1,4-naphthoquinone. In Burkholderia sp, this protein is 2-haloacrylate reductase.